Reading from the N-terminus, the 227-residue chain is uncharacterized protein (227 aa).

Residues 52–100 (NKRAKLYRERNKAKLKEKQHKWYHKGGGKEHKKLYDKINLEKSNMRDKN) are a coiled coil.

This sequence belongs to the mimivirus L246/L426 family.

This is an uncharacterized protein from Acanthamoeba polyphaga mimivirus (APMV).